Reading from the N-terminus, the 340-residue chain is tRNA dimethylallyltransferase (340 aa).

The interval 1 to 25 is disordered; sequence MDQNRSPNGRDCREPPSPSSTARPG. 31–38 is an ATP binding site; sequence GPTATGKS. Substrate is bound at residue 33 to 38; sequence TATGKS. Positions 56 to 59 are interaction with substrate tRNA; it reads DSRQ.

Belongs to the IPP transferase family. As to quaternary structure, monomer. Mg(2+) is required as a cofactor.

The catalysed reaction is adenosine(37) in tRNA + dimethylallyl diphosphate = N(6)-dimethylallyladenosine(37) in tRNA + diphosphate. Functionally, catalyzes the transfer of a dimethylallyl group onto the adenine at position 37 in tRNAs that read codons beginning with uridine, leading to the formation of N6-(dimethylallyl)adenosine (i(6)A). This chain is tRNA dimethylallyltransferase, found in Synechococcus sp. (strain JA-3-3Ab) (Cyanobacteria bacterium Yellowstone A-Prime).